The chain runs to 284 residues: MASYPYRQGCPGAAGQAPGAPPGSYYPGPPNSGGQYGSGLPPGGGYGGPAPGGPYGPPAGGGPYGHPNPGMFPSGTPGGPYGGAAPGGPYGQPPPSSYGAQQPGLYGQGGAPPNVDPEAYSWFQSVDSDHSGYISMKELKQALVNCNWSSFNDETCLMMINMFDKTKSGRIDVYGFSALWKFIQQWKNLFQQYDRDRSGSISYTELQQALSQMGYNLSPQFTQLLVSRYCPRSANPAMQLDRFIQVCTQLQVLTEAFREKDTAVQGNIRLSFEDFVTMTASRML.

Positions 1–111 (MASYPYRQGC…QPGLYGQGGA (111 aa)) are disordered. Low complexity predominate over residues 8–26 (QGCPGAAGQAPGAPPGSYY). 9 tandem repeats follow at residues 21–29 (PPGSYYPGP), 31–39 (NSGGQYGSG), 41–49 (PPGGGYGGP), 50–58 (APGGPYGPP), 59–67 (AGGGPYGHP), 76–84 (TPGGPYGGA), 85–92 (APGGPYGQ), 93–100 (PPPSSYGA), and 101–109 (QQPGLYGQG). The 9 X 9 AA approximate tandem repeat of [AP]-P-G-G-P-Y-G-G-P-P stretch occupies residues 21–109 (PPGSYYPGPP…AQQPGLYGQG (89 aa)). Residues 34-50 (GQYGSGLPPGGGYGGPA) show a composition bias toward gly residues. The span at 65–75 (GHPNPGMFPSG) shows a compositional bias: low complexity. A compositionally biased stretch (gly residues) spans 76–90 (TPGGPYGGAAPGGPY). EF-hand domains follow at residues 114–149 (NVDPEAYSWFQSVDSDHSGYISMKELKQALVNCNWS), 155–183 (TCLMMINMFDKTKSGRIDVYGFSALWKFI), 181–216 (KFIQQWKNLFQQYDRDRSGSISYTELQQALSQMGYN), 217–253 (LSPQFTQLLVSRYCPRSANPAMQLDRFIQVCTQLQVL), and 254–283 (TEAFREKDTAVQGNIRLSFEDFVTMTASRM). 4 residues coordinate Ca(2+): D127, D129, S131, and Y133. Residue K137 forms a Glycyl lysine isopeptide (Lys-Gly) (interchain with G-Cter in ubiquitin) linkage. Ca(2+) is bound at residue E138. The Ca(2+) site is built by D194, D196, S198, S200, and E205. The required for interaction with PDCD6 stretch occupies residues 204–284 (TELQQALSQM…FVTMTASRML (81 aa)).

Heterodimer; heterodimerizes (via the EF-hand 5) with PDCD6. Dissociates from PDCD6 in presence of calcium. In terms of processing, ubiquitinated by the BCR(KLHL12) E3 ubiquitin ligase complex.

The protein localises to the cytoplasm. It localises to the endoplasmic reticulum. The protein resides in the membrane. It is found in the cytoplasmic vesicle. Its subcellular location is the COPII-coated vesicle membrane. Calcium-binding protein that acts as an adapter that bridges unrelated proteins or stabilizes weak protein-protein complexes in response to calcium. Together with PDCD6, acts as a calcium-dependent adapter for the BCR(KLHL12) complex, a complex involved in endoplasmic reticulum (ER)-Golgi transport by regulating the size of COPII coats. In response to cytosolic calcium increase, the heterodimer formed with PDCD6 interacts with, and bridges together the BCR(KLHL12) complex and SEC31 (SEC31A or SEC31B), promoting monoubiquitination of SEC31 and subsequent collagen export, which is required for neural crest specification. Its role in the heterodimer formed with PDCD6 is however unclear: some evidence shows that PEF1 and PDCD6 work together and promote association between PDCD6 and SEC31 in presence of calcium. Other reports show that PEF1 dissociates from PDCD6 in presence of calcium, and may act as a negative regulator of PDCD6. Also acts as a negative regulator of ER-Golgi transport; possibly by inhibiting interaction between PDCD6 and SEC31. This chain is Peflin, found in Homo sapiens (Human).